The following is a 121-amino-acid chain: Putative membrane protein insertion efficiency factor (121 aa).

The protein belongs to the UPF0161 family.

The protein localises to the cell membrane. Its function is as follows. Could be involved in insertion of integral membrane proteins into the membrane. The polypeptide is Putative membrane protein insertion efficiency factor (Rhodococcus opacus (strain B4)).